Consider the following 325-residue polypeptide: Bifunctional ligase/repressor BirA (325 aa).

A DNA-binding region (H-T-H motif) is located at residues G23–E42. One can recognise a BPL/LPL catalytic domain in the interval R74–M262. Residues Q118, R122 to R124, and K189 contribute to the biotin site.

It belongs to the biotin--protein ligase family.

It catalyses the reaction biotin + L-lysyl-[protein] + ATP = N(6)-biotinyl-L-lysyl-[protein] + AMP + diphosphate + H(+). Functionally, acts both as a biotin--[acetyl-CoA-carboxylase] ligase and a repressor. This Bacillus spizizenii (strain ATCC 23059 / NRRL B-14472 / W23) (Bacillus subtilis subsp. spizizenii) protein is Bifunctional ligase/repressor BirA.